Reading from the N-terminus, the 159-residue chain is 17 kDa surface antigen (159 aa).

The first 19 residues, 1–19 (MKLLSKIMIIALATSMLQA), serve as a signal peptide directing secretion. Cys20 carries N-palmitoyl cysteine lipidation. A lipid anchor (S-diacylglycerol cysteine) is attached at Cys20.

Belongs to the rickettsiale 17 kDa surface antigen family.

Its subcellular location is the cell outer membrane. The polypeptide is 17 kDa surface antigen (omp) (Rickettsia japonica (strain ATCC VR-1363 / YH)).